The chain runs to 243 residues: Pyridoxine 5'-phosphate synthase (243 aa).

Asparagine 9 is a binding site for 3-amino-2-oxopropyl phosphate. 11-12 (DH) serves as a coordination point for 1-deoxy-D-xylulose 5-phosphate. Residue arginine 20 coordinates 3-amino-2-oxopropyl phosphate. Histidine 45 acts as the Proton acceptor in catalysis. 1-deoxy-D-xylulose 5-phosphate contacts are provided by arginine 47 and histidine 52. The active-site Proton acceptor is glutamate 72. Position 102 (threonine 102) interacts with 1-deoxy-D-xylulose 5-phosphate. The Proton donor role is filled by histidine 193. 3-amino-2-oxopropyl phosphate contacts are provided by residues glycine 194 and 215–216 (GH).

Belongs to the PNP synthase family. Homooctamer; tetramer of dimers.

It localises to the cytoplasm. It carries out the reaction 3-amino-2-oxopropyl phosphate + 1-deoxy-D-xylulose 5-phosphate = pyridoxine 5'-phosphate + phosphate + 2 H2O + H(+). The protein operates within cofactor biosynthesis; pyridoxine 5'-phosphate biosynthesis; pyridoxine 5'-phosphate from D-erythrose 4-phosphate: step 5/5. Catalyzes the complicated ring closure reaction between the two acyclic compounds 1-deoxy-D-xylulose-5-phosphate (DXP) and 3-amino-2-oxopropyl phosphate (1-amino-acetone-3-phosphate or AAP) to form pyridoxine 5'-phosphate (PNP) and inorganic phosphate. The sequence is that of Pyridoxine 5'-phosphate synthase from Shigella dysenteriae serotype 1 (strain Sd197).